A 765-amino-acid chain; its full sequence is DNA ligase (765 aa).

Positions 1 to 34 (MAGDDEDRAVPAAEGAPPPSALPPVSGLDVKAAE) are disordered. NAD(+) is bound by residues 61–65 (DAEYD), 110–111 (SL), and E144. Catalysis depends on K146, which acts as the N6-AMP-lysine intermediate. Residues R167, E204, K317, and K341 each contribute to the NAD(+) site. Residues C446, C449, C464, and C470 each contribute to the Zn(2+) site. One can recognise a BRCT domain in the interval 687-765 (ATDSAIAGKT…EDEWLAIAQG (79 aa)).

Belongs to the NAD-dependent DNA ligase family. LigA subfamily. It depends on Mg(2+) as a cofactor. Mn(2+) is required as a cofactor.

It carries out the reaction NAD(+) + (deoxyribonucleotide)n-3'-hydroxyl + 5'-phospho-(deoxyribonucleotide)m = (deoxyribonucleotide)n+m + AMP + beta-nicotinamide D-nucleotide.. In terms of biological role, DNA ligase that catalyzes the formation of phosphodiester linkages between 5'-phosphoryl and 3'-hydroxyl groups in double-stranded DNA using NAD as a coenzyme and as the energy source for the reaction. It is essential for DNA replication and repair of damaged DNA. The sequence is that of DNA ligase from Paracoccus denitrificans (strain Pd 1222).